The primary structure comprises 108 residues: ATP synthase subunit H, mitochondrial (108 aa).

The transit peptide at Met-1 to Arg-19 directs the protein to the mitochondrion. Disordered regions lie at residues Ala-40 to Val-60 and Ala-75 to Val-108. The segment covering Val-47–Val-60 has biased composition (low complexity). Over residues Gly-81 to Ala-92 the composition is skewed to polar residues. The segment covering Asn-93–Val-108 has biased composition (acidic residues).

As to quaternary structure, F-type ATP synthases have 2 components, the catalytic core F(1) and the membrane-embedded component F(0), linked together by a central stalk and a peripheral stalk. The central stalk, also called rotor shaft, is often seen as part of F(1). The peripheral stalk is seen as part of F(0). F(0) contains the membrane channel next to the rotor. F-type ATP synthases form dimers but each monomer functions independently in ATP generation. The dimer consists of 17 different polypeptides: ATP1 (subunit alpha, 3 molecules per monomer, part of F(1)), ATP2 (subunit beta, 3 copies per monomer, part of F(1)), ATP3 (subunit gamma, part of the central stalk), ATP4 (subunit b, part of the peripheral stalk), ATP5/OSCP (subunit 5/OSCP, part of the peripheral stalk), ATP6 (subunit a, part of the peripheral stalk), ATP7 (subunit d, part of the peripheral stalk), ATP8 (subunit 8, part of the peripheral stalk), OLI1 (subunit c, part of the rotor, 10 molecules per monomer), ATP14 (subunit H, part of the peripheral stalk), ATP15 (subunit epsilon, part of the central stalk), ATP16 (subunit delta, part of the central stalk), ATP17 (subunit f, part of the peripheral stalk), ATP18 (subunit i/j, part of the peripheral stalk), ATP19 (subunit k, dimer-specific, at interface between monomers), ATP20 (subunit g, at interface between monomers), TIM11 (subunit e, at interface between monomers).

It is found in the mitochondrion inner membrane. Mitochondrial membrane ATP synthase (F(1)F(0) ATP synthase or Complex V) produces ATP from ADP in the presence of a proton gradient across the membrane which is generated by electron transport complexes of the respiratory chain. F-type ATP synthases consist of two structural domains, F(1) - containing the extramembraneous catalytic core, and F(0) - containing the membrane proton channel, linked together by a central stalk and a peripheral stalk. During catalysis, ATP synthesis in the catalytic domain of F(1) is coupled via a rotary mechanism of the central stalk subunits to proton translocation. Part of the peripheral stalk. This is ATP synthase subunit H, mitochondrial from Yarrowia lipolytica (strain CLIB 122 / E 150) (Yeast).